Reading from the N-terminus, the 132-residue chain is Small ribosomal subunit protein uS8 (132 aa).

The protein belongs to the universal ribosomal protein uS8 family. In terms of assembly, part of the 30S ribosomal subunit. Contacts proteins S5 and S12.

In terms of biological role, one of the primary rRNA binding proteins, it binds directly to 16S rRNA central domain where it helps coordinate assembly of the platform of the 30S subunit. This chain is Small ribosomal subunit protein uS8, found in Streptomyces griseus subsp. griseus (strain JCM 4626 / CBS 651.72 / NBRC 13350 / KCC S-0626 / ISP 5235).